The chain runs to 328 residues: Ferredoxin--NADP reductase (328 aa).

The FAD site is built by Ser-14, Glu-33, Gln-41, Tyr-46, Ile-90, and Phe-126.

Belongs to the ferredoxin--NADP reductase type 2 family. As to quaternary structure, homodimer. FAD is required as a cofactor.

It catalyses the reaction 2 reduced [2Fe-2S]-[ferredoxin] + NADP(+) + H(+) = 2 oxidized [2Fe-2S]-[ferredoxin] + NADPH. The sequence is that of Ferredoxin--NADP reductase from Mycoplasmoides gallisepticum (strain R(low / passage 15 / clone 2)) (Mycoplasma gallisepticum).